The chain runs to 198 residues: dTTP/UTP pyrophosphatase (198 aa).

D75 functions as the Proton acceptor in the catalytic mechanism.

It belongs to the Maf family. YhdE subfamily. A divalent metal cation is required as a cofactor.

The protein localises to the cytoplasm. The enzyme catalyses dTTP + H2O = dTMP + diphosphate + H(+). It catalyses the reaction UTP + H2O = UMP + diphosphate + H(+). Nucleoside triphosphate pyrophosphatase that hydrolyzes dTTP and UTP. May have a dual role in cell division arrest and in preventing the incorporation of modified nucleotides into cellular nucleic acids. This chain is dTTP/UTP pyrophosphatase, found in Wolbachia pipientis wMel.